The primary structure comprises 333 residues: ADP-L-glycero-D-manno-heptose-6-epimerase (333 aa).

NADP(+)-binding positions include 11–12, 32–33, lysine 39, lysine 54, 76–80, and asparagine 93; these read FI, DN, and QGACS. Catalysis depends on tyrosine 140, which acts as the Proton acceptor. Residue lysine 144 coordinates NADP(+). Asparagine 170 lines the substrate pocket. Valine 171 and lysine 179 together coordinate NADP(+). The Proton acceptor role is filled by lysine 179. Substrate is bound by residues arginine 181, histidine 188, 202 to 205, arginine 215, and tyrosine 294; that span reads FGGW.

This sequence belongs to the NAD(P)-dependent epimerase/dehydratase family. HldD subfamily. In terms of assembly, homopentamer. The cofactor is NADP(+).

It carries out the reaction ADP-D-glycero-beta-D-manno-heptose = ADP-L-glycero-beta-D-manno-heptose. The protein operates within nucleotide-sugar biosynthesis; ADP-L-glycero-beta-D-manno-heptose biosynthesis; ADP-L-glycero-beta-D-manno-heptose from D-glycero-beta-D-manno-heptose 7-phosphate: step 4/4. Its pathway is bacterial outer membrane biogenesis; LPS core biosynthesis. Its function is as follows. Catalyzes the interconversion between ADP-D-glycero-beta-D-manno-heptose and ADP-L-glycero-beta-D-manno-heptose via an epimerization at carbon 6 of the heptose. This is ADP-L-glycero-D-manno-heptose-6-epimerase from Chromobacterium violaceum (strain ATCC 12472 / DSM 30191 / JCM 1249 / CCUG 213 / NBRC 12614 / NCIMB 9131 / NCTC 9757 / MK).